The chain runs to 75 residues: Small ribosomal subunit protein bS18 (75 aa).

It belongs to the bacterial ribosomal protein bS18 family. Part of the 30S ribosomal subunit. Forms a tight heterodimer with protein bS6.

In terms of biological role, binds as a heterodimer with protein bS6 to the central domain of the 16S rRNA, where it helps stabilize the platform of the 30S subunit. The protein is Small ribosomal subunit protein bS18 of Buchnera aphidicola subsp. Acyrthosiphon pisum (strain 5A).